Here is a 188-residue protein sequence, read N- to C-terminus: Pyridoxal 5'-phosphate synthase subunit PdxT (188 aa).

46 to 48 (GES) is an L-glutamine binding site. The active-site Nucleophile is the C78. Residues R105 and 134–135 (IR) each bind L-glutamine. Catalysis depends on charge relay system residues H170 and E172.

Belongs to the glutaminase PdxT/SNO family. In terms of assembly, in the presence of PdxS, forms a dodecamer of heterodimers. Only shows activity in the heterodimer.

The enzyme catalyses aldehydo-D-ribose 5-phosphate + D-glyceraldehyde 3-phosphate + L-glutamine = pyridoxal 5'-phosphate + L-glutamate + phosphate + 3 H2O + H(+). It carries out the reaction L-glutamine + H2O = L-glutamate + NH4(+). Its pathway is cofactor biosynthesis; pyridoxal 5'-phosphate biosynthesis. In terms of biological role, catalyzes the hydrolysis of glutamine to glutamate and ammonia as part of the biosynthesis of pyridoxal 5'-phosphate. The resulting ammonia molecule is channeled to the active site of PdxS. The chain is Pyridoxal 5'-phosphate synthase subunit PdxT from Clostridium kluyveri (strain ATCC 8527 / DSM 555 / NBRC 12016 / NCIMB 10680 / K1).